We begin with the raw amino-acid sequence, 444 residues long: Ribosomal protein uS12 methylthiotransferase RimO (444 aa).

The MTTase N-terminal domain maps to 4-118 (IKYGVVSLGC…LSDAIKKSIE (115 aa)). Cys-13, Cys-48, Cys-81, Cys-155, Cys-159, and Cys-162 together coordinate [4Fe-4S] cluster. The Radical SAM core domain occupies 141–373 (TTQKHYAYLR…MQRDIVKSIN (233 aa)). A TRAM domain is found at 374 to 440 (ADKVNKVYKV…EYDLIGVVCD (67 aa)).

Belongs to the methylthiotransferase family. RimO subfamily. Requires [4Fe-4S] cluster as cofactor.

The protein resides in the cytoplasm. It catalyses the reaction L-aspartate(89)-[ribosomal protein uS12]-hydrogen + (sulfur carrier)-SH + AH2 + 2 S-adenosyl-L-methionine = 3-methylsulfanyl-L-aspartate(89)-[ribosomal protein uS12]-hydrogen + (sulfur carrier)-H + 5'-deoxyadenosine + L-methionine + A + S-adenosyl-L-homocysteine + 2 H(+). Catalyzes the methylthiolation of an aspartic acid residue of ribosomal protein uS12. The protein is Ribosomal protein uS12 methylthiotransferase RimO of Clostridium tetani (strain Massachusetts / E88).